The chain runs to 421 residues: MSRQMWLDTSALLEAISEYVVRCNGDTFSGLTTGDFNALSNMFTQLSVSSAGYVSDPRVPLQTMSNMFVSFITSTDRCGYMLRKTWFNSDTKPTVSDDFITTYIRPRLQVPMSDTVRQLNNLSLQPSAKPKLYERQNAIMKGLDIPYSEPIEPCKLFRSVAGQTGNIPMMGILATPPAAQQQPFFVAERRRILFGIRSNAAIPAGAYQFVVPAWASVLSVTGAYVYFTNSFFGTTIAGVTATATAADAATTFTVPTDANNLPVQTDSRLSFSLGGGNINLELGVAKTGFCVAIEGEFTILANRSQAYYTLNSITQTPTSIDDFDVSDFLTTFLSQLRACGQYEIFSDAMDQLTNSLITNYMDPPAIPAGLAFTSPWFRFSERARTILALQNVDLNIRKLIVRHLWVITSLIAVFGRYYRPN.

Belongs to the phytoreovirus outer capsid protein P8 family. Homotrimer. Homomultimer. Interacts with host peroxisomal glycolate oxidase (GOX). This interaction mediates its relocation to virus factories peripheral to host peroxisomes.

Its subcellular location is the virion. It is found in the host cytoplasm. Capsid protein which self-assembles to form the outer icosahedral capsid with a T=13 symmetry, about 70 nm in diameter and consisting of 780 molecules capsid proteins. In Rice dwarf virus (isolate S) (RDV), this protein is Outer capsid protein P8 (S8).